The chain runs to 115 residues: Macrophage migration inhibitory factor homolog (115 aa).

Pro2 functions as the Proton acceptor; via imino nitrogen in the catalytic mechanism. Residues Lys33 and Ile65 each coordinate substrate.

This sequence belongs to the MIF family.

It localises to the secreted. The catalysed reaction is L-dopachrome = 5,6-dihydroxyindole-2-carboxylate. It catalyses the reaction 3-phenylpyruvate = enol-phenylpyruvate. Tautomerization of the methyl ester of L-dopachrome. Inhibits migration of human peripheral blood mononuclear cells. This Brugia malayi (Filarial nematode worm) protein is Macrophage migration inhibitory factor homolog.